Consider the following 478-residue polypeptide: DNA-directed RNA polymerase II subunit RPB1 (478 aa).

7 residues coordinate Zn(2+): Cys68, Cys71, Cys78, His81, Cys108, Cys111, and Cys149. The Mg(2+) site is built by Asp474 and Asp476.

Belongs to the RNA polymerase beta' chain family. As to quaternary structure, component of the RNA polymerase II (Pol II) complex consisting of 12 subunits. Phosphorylation activates POL II.

The protein resides in the nucleus. The catalysed reaction is RNA(n) + a ribonucleoside 5'-triphosphate = RNA(n+1) + diphosphate. Functionally, DNA-dependent RNA polymerase catalyzes the transcription of DNA into RNA using the four ribonucleoside triphosphates as substrates. Largest and catalytic component of RNA polymerase II which synthesizes mRNA precursors and many functional non-coding RNAs. Forms the polymerase active center together with the second largest subunit. Pol II is the central component of the basal RNA polymerase II transcription machinery. It is composed of mobile elements that move relative to each other. RPB1 is part of the core element with the central large cleft, the clamp element that moves to open and close the cleft and the jaws that are thought to grab the incoming DNA template. At the start of transcription, a single-stranded DNA template strand of the promoter is positioned within the central active site cleft of Pol II. A bridging helix emanates from RPB1 and crosses the cleft near the catalytic site and is thought to promote translocation of Pol II by acting as a ratchet that moves the RNA-DNA hybrid through the active site by switching from straight to bent conformations at each step of nucleotide addition. During transcription elongation, Pol II moves on the template as the transcript elongates. Elongation is influenced by the phosphorylation status of the C-terminal domain (CTD) of Pol II largest subunit (RPB1), which serves as a platform for assembly of factors that regulate transcription initiation, elongation, termination and mRNA processing. In Euplotoides octocarinatus (Freshwater ciliate), this protein is DNA-directed RNA polymerase II subunit RPB1 (RPB1).